Consider the following 150-residue polypeptide: 3-dehydroquinate dehydratase (150 aa).

Residue tyrosine 26 is the Proton acceptor of the active site. Substrate is bound by residues asparagine 77, histidine 83, and aspartate 90. The active-site Proton donor is histidine 103. Residues 104–105 (LS) and arginine 114 each bind substrate.

Belongs to the type-II 3-dehydroquinase family. In terms of assembly, homododecamer.

It catalyses the reaction 3-dehydroquinate = 3-dehydroshikimate + H2O. It functions in the pathway metabolic intermediate biosynthesis; chorismate biosynthesis; chorismate from D-erythrose 4-phosphate and phosphoenolpyruvate: step 3/7. Functionally, catalyzes a trans-dehydration via an enolate intermediate. The polypeptide is 3-dehydroquinate dehydratase (Yersinia pseudotuberculosis serotype O:1b (strain IP 31758)).